The sequence spans 897 residues: Alanine--tRNA ligase (897 aa).

Zn(2+) is bound by residues His-591, His-595, Cys-695, and His-699.

This sequence belongs to the class-II aminoacyl-tRNA synthetase family. Requires Zn(2+) as cofactor.

Its subcellular location is the cytoplasm. The enzyme catalyses tRNA(Ala) + L-alanine + ATP = L-alanyl-tRNA(Ala) + AMP + diphosphate. In terms of biological role, catalyzes the attachment of alanine to tRNA(Ala) in a two-step reaction: alanine is first activated by ATP to form Ala-AMP and then transferred to the acceptor end of tRNA(Ala). Also edits incorrectly charged Ser-tRNA(Ala) and Gly-tRNA(Ala) via its editing domain. The chain is Alanine--tRNA ligase from Methanobrevibacter smithii (strain ATCC 35061 / DSM 861 / OCM 144 / PS).